We begin with the raw amino-acid sequence, 650 residues long: DNA gyrase subunit B (650 aa).

Over residues Arg-400–Pro-414 the composition is skewed to basic and acidic residues. The disordered stretch occupies residues Arg-400–Gly-422. Residues Ser-435–Pro-549 form the Toprim domain. Mg(2+)-binding residues include Glu-441, Asp-514, and Asp-516.

Belongs to the type II topoisomerase GyrB family. As to quaternary structure, heterotetramer, composed of two GyrA and two GyrB chains. In the heterotetramer, GyrA contains the active site tyrosine that forms a transient covalent intermediate with DNA, while GyrB binds cofactors and catalyzes ATP hydrolysis. It depends on Mg(2+) as a cofactor. Requires Mn(2+) as cofactor. The cofactor is Ca(2+).

The protein localises to the cytoplasm. It catalyses the reaction ATP-dependent breakage, passage and rejoining of double-stranded DNA.. Its function is as follows. A type II topoisomerase that negatively supercoils closed circular double-stranded (ds) DNA in an ATP-dependent manner to modulate DNA topology and maintain chromosomes in an underwound state. Negative supercoiling favors strand separation, and DNA replication, transcription, recombination and repair, all of which involve strand separation. Also able to catalyze the interconversion of other topological isomers of dsDNA rings, including catenanes and knotted rings. Type II topoisomerases break and join 2 DNA strands simultaneously in an ATP-dependent manner. This is DNA gyrase subunit B from Mycoplasma genitalium (strain ATCC 33530 / DSM 19775 / NCTC 10195 / G37) (Mycoplasmoides genitalium).